The following is a 229-amino-acid chain: Movement and silencing protein TGBp1 (229 aa).

The (+)RNA virus helicase ATP-binding domain maps to 1 to 114; sequence MVEFTKRLLL…PAAQVPHFVK (114 aa). Residues 115–229 enclose the (+)RNA virus helicase C-terminal domain; that stretch reads LFSHRCGLNS…MSFDAADTSA (115 aa).

It belongs to the Tymovirales TGBp1 protein family. In terms of assembly, homodimer and homooligomer. Interacts with capsid protein. Interacts with host AGO1; this interaction targets the host protein for degradation, thereby suppressing the antiviral RNA silencing.

Its subcellular location is the host cytoplasm. Transports viral genome to neighboring plant cells directly through plasmosdesmata, without any budding. The movement protein allows efficient cell to cell propagation, by bypassing the host cell wall barrier. Increases plasmodesma size exclusion limit. Acts as a suppressor of RNA-mediated gene silencing, also known as post-transcriptional gene silencing (PTGS), a mechanism of plant viral defense that limits the accumulation of viral RNAs. In Strawberry mild yellow edge-associated virus (SMYEaV), this protein is Movement and silencing protein TGBp1.